The chain runs to 353 residues: Phosphate acyltransferase (353 aa).

The protein belongs to the PlsX family. As to quaternary structure, homodimer. Probably interacts with PlsY.

It localises to the cytoplasm. The catalysed reaction is a fatty acyl-[ACP] + phosphate = an acyl phosphate + holo-[ACP]. The protein operates within lipid metabolism; phospholipid metabolism. Functionally, catalyzes the reversible formation of acyl-phosphate (acyl-PO(4)) from acyl-[acyl-carrier-protein] (acyl-ACP). This enzyme utilizes acyl-ACP as fatty acyl donor, but not acyl-CoA. This is Phosphate acyltransferase from Myxococcus xanthus (strain DK1622).